Reading from the N-terminus, the 552-residue chain is HTH-type transcriptional regulator SgrR (552 aa).

One can recognise an HTH marR-type domain in the interval 1–116; the sequence is MPSARLQQQF…LVSHLGRSFR (116 aa). The segment at residues 26–49 is a DNA-binding region (H-T-H motif); the sequence is LNELAALLSCSRRHMRTLLNTMQD. The solute-binding stretch occupies residues 163-492; sequence ELEADIAHHW…IDWQADAARW (330 aa).

Activates the small RNA gene sgrS under glucose-phosphate stress conditions as well as yfdZ. Represses its own transcription under both stress and non-stress conditions. Might act as a sensor of the intracellular accumulation of phosphoglucose by binding these molecules in its C-terminal solute-binding domain. The chain is HTH-type transcriptional regulator SgrR from Shigella dysenteriae serotype 1 (strain Sd197).